Consider the following 1898-residue polypeptide: 1-phosphatidylinositol 4,5-bisphosphate phosphodiesterase epsilon-1 (1898 aa).

The 263-residue stretch at 66-328 folds into the Ras-GEF domain; the sequence is FPEEVAFQLS…EREQKEKEAK (263 aa). Disordered regions lie at residues 419–444 and 569–722; these read QPLDSGRGAPSPMPSGRTPGTGGVGV and TNTN…GPSG. The span at 569-583 shows a compositional bias: polar residues; the sequence is TNTNATRPNDSSLSS. Basic residues predominate over residues 590 to 605; that stretch reads SRLKNLKNAMQKKLRG. 3 stretches are compositionally biased toward low complexity: residues 625-637, 666-687, and 701-716; these read PPSIKSQISSQSG, YTPRSRTPTSSSYGGRSVGGRS, and SGSISSSGQMSIQVSG. In terms of domain architecture, PI-PLC X-box spans 910 to 1058; the sequence is EDLRYPLSHY…MKNKILIKNK (149 aa). Active-site residues include His-925 and His-970. Disordered regions lie at residues 1082-1178 and 1238-1274; these read QLNL…DRKT and EEGPASASLSFSSRARTPSNLLNTPAPPRRQRSSTQL. Acidic residues predominate over residues 1098–1123; sequence TVDEVEDDDLDEFLDDEENEEDDQEE. A compositionally biased stretch (basic and acidic residues) spans 1124–1144; sequence VQVRSEKEDSPKTSKRAEKSA. The segment covering 1146-1155 has biased composition (polar residues); sequence NIKQQDSLCS. Composition is skewed to low complexity over residues 1163–1172 and 1242–1253; these read KPSTSKTTSK and ASASLSFSSRAR. Residues 1279–1385 enclose the PI-PLC Y-box domain; sequence AAEFLGSVRA…CGYQLKPRCL (107 aa). Residues 1391–1517 form the C2 domain; the sequence is LLYNKFLPLS…PLRTPTNLPI (127 aa). Residues 1570-1665 form the Ras-associating 1 domain; sequence QIFVLRITGA…RRFVLRKKGS (96 aa). Positions 1680 to 1694 are enriched in low complexity; sequence GTSGSSTSVSPSPLT. The tract at residues 1680-1711 is disordered; it reads GTSGSSTSVSPSPLTKDGHVKSASSNQLHGRS. In terms of domain architecture, Ras-associating 2 spans 1738–1857; that stretch reads DTFLVCVHNV…GRFVLENRKD (120 aa).

As to quaternary structure, interacts (via Ras-associating domain 1) with let-60 (in GTP-bound form). The cofactor is Ca(2+). As to expression, expressed in the spermatheca, vulva, intestine and excretory cells. Expressed in sensory neurons AWC, AFD, ASE, ASG and BAG, interneurons, ventral nerve cord neurons and tail neurons. Expressed in body muscles.

The catalysed reaction is a 1,2-diacyl-sn-glycero-3-phospho-(1D-myo-inositol-4,5-bisphosphate) + H2O = 1D-myo-inositol 1,4,5-trisphosphate + a 1,2-diacyl-sn-glycerol + H(+). Functionally, the production of the second messenger molecules diacylglycerol (DAG) and inositol 1,4,5-trisphosphate (IP3) is mediated by activated phosphatidylinositol-specific phospholipase C enzymes. plc-1 is a bifunctional enzyme which also regulates small GTPases of the Ras superfamily through its Ras guanine-exchange factor (RasGEF) activity. By activating IP3 receptor itr-1-mediated intracellular Ca(2+) release via the production of IP3, regulates ovulation by controlling contraction and/or dilation of the distal spermatheca valve during oocyte entry and the timing of the dilation of the spermatheca-uterine valve during oocyte exit. In a similar manner, plays an essential role in epidermal morphogenesis by regulating migration of epidermal cells during ventral closure and to a lesser extent by regulating epidermal cell dorsal intercalation. Involved in the immune response to S.aureus bacterium by activating kinase dkf-1 via the production of DAG which in turn activates transcription factor hlh-30. In ASER neurons, required for adjusting the orientation behavior in salt gradients based on the memory of previous salt concentration encountered. The polypeptide is 1-phosphatidylinositol 4,5-bisphosphate phosphodiesterase epsilon-1 (Caenorhabditis elegans).